The chain runs to 1073 residues: uncharacterized protein (1073 aa).

The signal sequence occupies residues 1–36 (MAEIIHHSNVFTWAFHVSEYDGAPLLLLGSFSSVAS). Asparagine 132 carries N-linked (GlcNAc...) asparagine glycosylation. 392–399 (ATAGIGKS) is a binding site for ATP. N-linked (GlcNAc...) asparagine glycosylation is found at asparagine 544, asparagine 632, asparagine 703, asparagine 732, and asparagine 953.

This is an uncharacterized protein from Schizosaccharomyces pombe (strain 972 / ATCC 24843) (Fission yeast).